Here is a 383-residue protein sequence, read N- to C-terminus: Large ribosomal subunit protein uL3 (383 aa).

This sequence belongs to the universal ribosomal protein uL3 family.

The protein localises to the cytoplasm. The polypeptide is Large ribosomal subunit protein uL3 (RPL3-1) (Encephalitozoon cuniculi (strain GB-M1) (Microsporidian parasite)).